Here is an 89-residue protein sequence, read N- to C-terminus: Small ribosomal subunit protein uS15 (89 aa).

The protein belongs to the universal ribosomal protein uS15 family. In terms of assembly, part of the 30S ribosomal subunit. Forms a bridge to the 50S subunit in the 70S ribosome, contacting the 23S rRNA.

Functionally, one of the primary rRNA binding proteins, it binds directly to 16S rRNA where it helps nucleate assembly of the platform of the 30S subunit by binding and bridging several RNA helices of the 16S rRNA. In terms of biological role, forms an intersubunit bridge (bridge B4) with the 23S rRNA of the 50S subunit in the ribosome. This chain is Small ribosomal subunit protein uS15, found in Lactobacillus helveticus (strain DPC 4571).